The following is a 116-amino-acid chain: U16-barytoxin-Tl1b (116 aa).

Positions 1–20 (MKTIIVFLSLLVLATKFGDA) are cleaved as a signal peptide. Residues 21 to 74 (KEGVNQKQKKEVTQNEFREEYLNEMAAMSLVQQLEAIERALFENEAGRNSRQKR) constitute a propeptide that is removed on maturation. 3 disulfides stabilise this stretch: Cys75–Cys90, Cys82–Cys95, and Cys89–Cys110.

This sequence belongs to the neurotoxin 14 (magi-1) family. 06 (ICK-Trit) subfamily. Expressed by the venom gland.

Its subcellular location is the secreted. Ion channel inhibitor. The sequence is that of U16-barytoxin-Tl1b from Trittame loki (Brush-footed trapdoor spider).